The chain runs to 209 residues: Ribosomal RNA large subunit methyltransferase E (209 aa).

Positions 60, 62, 80, 96, and 121 each coordinate S-adenosyl-L-methionine. Lysine 161 functions as the Proton acceptor in the catalytic mechanism. Residues 182–196 (VQMRKPSSSRDRSRE) show a composition bias toward basic and acidic residues. The interval 182–209 (VQMRKPSSSRDRSREQYLLGRGFRGRSE) is disordered.

Belongs to the class I-like SAM-binding methyltransferase superfamily. RNA methyltransferase RlmE family.

It is found in the cytoplasm. The enzyme catalyses uridine(2552) in 23S rRNA + S-adenosyl-L-methionine = 2'-O-methyluridine(2552) in 23S rRNA + S-adenosyl-L-homocysteine + H(+). Specifically methylates the uridine in position 2552 of 23S rRNA at the 2'-O position of the ribose in the fully assembled 50S ribosomal subunit. This Pseudomonas fluorescens (strain ATCC BAA-477 / NRRL B-23932 / Pf-5) protein is Ribosomal RNA large subunit methyltransferase E.